A 323-amino-acid polypeptide reads, in one-letter code: o-succinylbenzoate synthase (323 aa).

Lys134 acts as the Proton donor in catalysis. Residues Asp162, Glu191, and Asp214 each coordinate Mg(2+). The Proton acceptor role is filled by Lys236.

It belongs to the mandelate racemase/muconate lactonizing enzyme family. MenC type 1 subfamily. Requires a divalent metal cation as cofactor.

The catalysed reaction is (1R,6R)-6-hydroxy-2-succinyl-cyclohexa-2,4-diene-1-carboxylate = 2-succinylbenzoate + H2O. It participates in quinol/quinone metabolism; 1,4-dihydroxy-2-naphthoate biosynthesis; 1,4-dihydroxy-2-naphthoate from chorismate: step 4/7. Its pathway is quinol/quinone metabolism; menaquinone biosynthesis. Functionally, converts 2-succinyl-6-hydroxy-2,4-cyclohexadiene-1-carboxylate (SHCHC) to 2-succinylbenzoate (OSB). The chain is o-succinylbenzoate synthase from Pectobacterium atrosepticum (strain SCRI 1043 / ATCC BAA-672) (Erwinia carotovora subsp. atroseptica).